Here is a 566-residue protein sequence, read N- to C-terminus: Mucolipin-2 (566 aa).

Residues 1–65 (MARQPYRFPQ…YRARRQIPWK (65 aa)) are Cytoplasmic-facing. A helical membrane pass occupies residues 66 to 86 (LGLQILKIVMVTTQLVRFGLS). Residues 87–288 (NQLVVAFKED…IFGSTQKNAQ (202 aa)) are Extracellular-facing. Positions 107 to 123 (KGYSGTDEDDYSCSVYT) are extracellular/lumenal pore loop. Cystine bridges form between cysteine 164–cysteine 190 and cysteine 243–cysteine 274. The helical transmembrane segment at 289 to 309 (YVLVFDAFVIVICLASLILCT) threads the bilayer. Residues 310 to 346 (RSIVLALRLRKRFLNFFLEKYKRPVCDTDQWEFINGW) lie on the Cytoplasmic side of the membrane. The helical transmembrane segment at 347-367 (YVLVIISDLMTIIGSILKMEI) threads the bilayer. The Extracellular portion of the chain corresponds to 368 to 376 (KAKNLTNYD). The helical transmembrane segment at 377–397 (LCSIFLGTSTLLVWVGVIRYL) threads the bilayer. At 398–419 (GYFQAYNVLILTMQASLPKVLR) the chain is on the cytoplasmic side. A helical transmembrane segment spans residues 420-440 (FCACAGMIYLGYTFCGWIVLG). At 441 to 448 (PYHDKFEN) the chain is on the extracellular side. Positions 449 to 469 (LNTVAECLFSLVNGDDMFATF) form an intramembrane region, pore-forming. A Selectivity filter motif is present at residues 461 to 464 (NGDD). At 470–480 (AQIQQKSILVW) the chain is on the extracellular side. The chain crosses the membrane as a helical span at residues 481 to 502 (LFSRLYLYSFISLFIYMILSLF). Topologically, residues 503–566 (IALITDSYDT…RSDDHLIPIS (64 aa)) are cytoplasmic.

This sequence belongs to the transient receptor (TC 1.A.4) family. Polycystin subfamily. MCOLN2 sub-subfamily. Forms homooligomeric complexes; probably tetrameric. Can heterooligomerize with MCOLN1; heteromeric assemblies have different channel properties as compared to the respective homooligomers and may be tissue-specific. Interacts with TMEM176A.

It localises to the cell membrane. Its subcellular location is the late endosome membrane. The protein resides in the lysosome membrane. The protein localises to the recycling endosome membrane. It catalyses the reaction Ca(2+)(in) = Ca(2+)(out). The catalysed reaction is Fe(2+)(in) = Fe(2+)(out). Channel activity is reduced by low extracellular/lumenal pH level. Functionally, nonselective cation channel probably playing a role in the regulation of membrane trafficking events. Acts as a Ca(2+)-permeable cation channel with inwardly rectifying activity. May activate ARF6 and be involved in the trafficking of GPI-anchored cargo proteins to the cell surface via the ARF6-regulated recycling pathway. May play a role in immune processes. In adaptive immunity, TRPML2 and TRPML1 may play redundant roles in the function of the specialized lysosomes of B cells. In the innate immune response, may play a role in the regulation of chemokine secretion and macrophage migration. Through a possible and probably tissue-specific heteromerization with MCOLN1 may be at least in part involved in many lysosome-dependent cellular events. Also functions as a Fe(2+) permeable channel. The polypeptide is Mucolipin-2 (Homo sapiens (Human)).